The chain runs to 271 residues: Ubiquitin thioesterase OTUB1 (271 aa).

The residue at position 2 (Ala2) is an N-acetylalanine. The residue at position 16 (Ser16) is a Phosphoserine. Position 26 is a phosphotyrosine (Tyr26). Positions 80 to 271 (SYIRKTRPDG…RPGHYDILYK (192 aa)) constitute an OTU domain. Residue Asp88 is part of the active site. Residue Cys91 is the Nucleophile of the active site. Ubiquitin-conjugating enzyme E2 binding stretches follow at residues 130–138 (FTEFTIEDF) and 169–177 (DYLVVYLRL). Positions 189–195 (FFEHFIE) are free ubiquitin binding. Positions 206 to 213 (QEVEPMCK) are ubiquitin-conjugating enzyme E2 binding. Free ubiquitin binding regions lie at residues 214-221 (ESDHIHII) and 245-251 (NPHVFPE). Residue His265 is part of the active site.

This sequence belongs to the peptidase C65 family. Interacts with RNF128. Forms a ternary complex with RNF128 and USP8. Interacts with FUS and RACK1. Interacts with UBE2D1/UBCH5A, UBE2W/UBC16 and UBE2N/UBC13. Post-translationally, phosphorylation at Tyr-26 by SRC and SRMS promotes deubiquitination of RPTOR via a non-catalytic process.

The protein resides in the cytoplasm. The catalysed reaction is Thiol-dependent hydrolysis of ester, thioester, amide, peptide and isopeptide bonds formed by the C-terminal Gly of ubiquitin (a 76-residue protein attached to proteins as an intracellular targeting signal).. Its activity is regulated as follows. By free ubiquitin: binding of free ubiquitin triggers conformational changes in the OTU domain and formation of a ubiquitin-binding helix in the N-terminus, promoting binding of the conjugated donor ubiquitin in UBE2N/UBC13 to OTUB1. Functionally, hydrolase that can specifically remove compared to 'Lys-48'-linked conjugated ubiquitin from proteins and plays an important regulatory role at the level of protein turnover by preventing degradation. Regulator of T-cell anergy, a phenomenon that occurs when T-cells are rendered unresponsive to antigen rechallenge and no longer respond to their cognate antigen. Acts via its interaction with RNF128/GRAIL. Surprisingly, it regulates RNF128-mediated ubiquitination, but does not deubiquitinate polyubiquitinated RNF128. Deubiquitinates estrogen receptor alpha (ESR1). Mediates deubiquitination of 'Lys-48'-linked polyubiquitin chains, but not 'Lys-63'-linked polyubiquitin chains. Not able to cleave di-ubiquitin. Also capable of removing NEDD8 from NEDD8 conjugates, but with a much lower preference compared to 'Lys-48'-linked ubiquitin. Plays a key non-catalytic role in DNA repair regulation by inhibiting activity of RNF168, an E3 ubiquitin-protein ligase that promotes accumulation of 'Lys-63'-linked histone H2A and H2AX at DNA damage sites. Inhibits RNF168 independently of ubiquitin thioesterase activity by binding and inhibiting UBE2N/UBC13, the E2 partner of RNF168, thereby limiting spreading of 'Lys-63'-linked histone H2A and H2AX marks. Inhibition occurs by binding to free ubiquitin: free ubiquitin acts as an allosteric regulator that increases affinity for UBE2N/UBC13 and disrupts interaction with UBE2V1. The OTUB1-UBE2N/UBC13-free ubiquitin complex adopts a configuration that mimics a cleaved 'Lys48'-linked di-ubiquitin chain. Acts as a regulator of mTORC1 and mTORC2 complexes. When phosphorylated at Tyr-26, acts as an activator of the mTORC1 complex by mediating deubiquitination of RPTOR via a non-catalytic process: acts by binding and inhibiting the activity of the ubiquitin-conjugating enzyme E2 (UBE2D1/UBCH5A, UBE2W/UBC16 and UBE2N/UBC13), thereby preventing ubiquitination of RPTOR. Can also act as an inhibitor of the mTORC1 and mTORC2 complexes in response to amino acids by mediating non-catalytic deubiquitination of DEPTOR. The polypeptide is Ubiquitin thioesterase OTUB1 (Otub1) (Mus musculus (Mouse)).